We begin with the raw amino-acid sequence, 376 residues long: Gibberellin 20 oxidase 4 (376 aa).

The Fe2OG dioxygenase domain maps to 222–322 (DNESIFRLNY…RKTLAFFLCP (101 aa)). Fe cation contacts are provided by H247, D249, and H303. R313 is an active-site residue.

It belongs to the iron/ascorbate-dependent oxidoreductase family. GA20OX subfamily. The cofactor is Fe(2+). Requires L-ascorbate as cofactor. In terms of tissue distribution, expressed in roots. Detected in leaves, inflorescences and siliques, but not in stems and dry seeds.

The enzyme catalyses gibberellin A12 + 2 2-oxoglutarate + 3 O2 + H(+) = gibberellin A9 + 2 succinate + 3 CO2 + 2 H2O. The catalysed reaction is gibberellin A53 + 2 2-oxoglutarate + 3 O2 + H(+) = gibberellin A20 + 2 succinate + 3 CO2 + 2 H2O. Its pathway is plant hormone biosynthesis; gibberellin biosynthesis. Key oxidase enzyme in the biosynthesis of gibberellin that catalyzes the conversion of GA12 and GA53 to GA9 and GA20 respectively, via a three-step oxidation at C-20 of the GA skeleton. This Arabidopsis thaliana (Mouse-ear cress) protein is Gibberellin 20 oxidase 4 (GA20OX4).